The following is a 423-amino-acid chain: Glucose-1-phosphate adenylyltransferase (423 aa).

Alpha-D-glucose 1-phosphate-binding positions include Y98, G163, 178-179, and S189; that span reads EK.

Belongs to the bacterial/plant glucose-1-phosphate adenylyltransferase family. As to quaternary structure, homotetramer.

It catalyses the reaction alpha-D-glucose 1-phosphate + ATP + H(+) = ADP-alpha-D-glucose + diphosphate. The protein operates within glycan biosynthesis; glycogen biosynthesis. In terms of biological role, involved in the biosynthesis of ADP-glucose, a building block required for the elongation reactions to produce glycogen. Catalyzes the reaction between ATP and alpha-D-glucose 1-phosphate (G1P) to produce pyrophosphate and ADP-Glc. In Thermotoga neapolitana (strain ATCC 49049 / DSM 4359 / NBRC 107923 / NS-E), this protein is Glucose-1-phosphate adenylyltransferase.